Consider the following 441-residue polypeptide: RUN domain-containing protein 3A (441 aa).

Residues 1 to 293 (MEASFVQTTM…LQLQLEEAAA (293 aa)) are interaction with RAP2A. An RUN domain is found at 52–184 (DDSSEEFVNF…IDFSFCLKGE (133 aa)). Threonine 210 is modified (phosphothreonine). The interval 211–234 (DEEERHSAESSTSEDNSPEHPYLP) is disordered. Phosphoserine is present on serine 227. The stretch at 262-317 (YLEELVRLRESQLKDLEAENRRLQLQLEEAAAQNQREKRELEGVILELQEQLTGLI) forms a coiled coil. Positions 367–379 (PLSAEASLSSDSQ) are enriched in polar residues. The tract at residues 367 to 399 (PLSAEASLSSDSQRLGEGKRDEEPWGPIGKDPT) is disordered. The segment covering 380–389 (RLGEGKRDEE) has biased composition (basic and acidic residues). Phosphoserine is present on residues serine 411 and serine 414.

It belongs to the RUNDC3 family. Interacts with the GTP-bound form of RAP2A.

Its function is as follows. May act as an effector of RAP2A in neuronal cells. The sequence is that of RUN domain-containing protein 3A (RUNDC3A) from Bos taurus (Bovine).